The primary structure comprises 186 residues: UPF0301 protein Daro_3893 (186 aa).

The protein belongs to the UPF0301 (AlgH) family.

The chain is UPF0301 protein Daro_3893 from Dechloromonas aromatica (strain RCB).